The chain runs to 468 residues: Phosphomethylpyrimidine synthase (468 aa).

Residues Asn80, Met109, Tyr138, His173, 193–195 (SRG), 234–237 (DGLR), and Glu273 contribute to the substrate site. His277 is a binding site for Zn(2+). Substrate is bound at residue Tyr300. His341 lines the Zn(2+) pocket. 3 residues coordinate [4Fe-4S] cluster: Cys421, Cys424, and Cys429.

This sequence belongs to the ThiC family. In terms of assembly, homodimer. [4Fe-4S] cluster is required as a cofactor.

The enzyme catalyses 5-amino-1-(5-phospho-beta-D-ribosyl)imidazole + S-adenosyl-L-methionine = 4-amino-2-methyl-5-(phosphooxymethyl)pyrimidine + CO + 5'-deoxyadenosine + formate + L-methionine + 3 H(+). It participates in cofactor biosynthesis; thiamine diphosphate biosynthesis. Catalyzes the synthesis of the hydroxymethylpyrimidine phosphate (HMP-P) moiety of thiamine from aminoimidazole ribotide (AIR) in a radical S-adenosyl-L-methionine (SAM)-dependent reaction. The polypeptide is Phosphomethylpyrimidine synthase (Anaeromyxobacter sp. (strain Fw109-5)).